A 984-amino-acid chain; its full sequence is Ephrin type-B receptor 1 (984 aa).

The signal sequence occupies residues 1–17 (MALDCLLLFLLASAVAA). Over 18-540 (MEETLMDTRT…YKSELREQLP (523 aa)) the chain is Extracellular. One can recognise an Eph LBD domain in the interval 19-201 (EETLMDTRTA…FFKKCPSIVQ (183 aa)). Fibronectin type-III domains lie at 322 to 432 (VPSG…TNQA) and 433 to 528 (APST…TLTD). N334, N426, and N480 each carry an N-linked (GlcNAc...) asparagine glycan. The helical transmembrane segment at 541 to 563 (LIAGSAAAGVVFVVSLVAISIVC) threads the bilayer. The Cytoplasmic portion of the chain corresponds to 564–984 (SRKRAYSKEA…QMNQSPSVMA (421 aa)). The residue at position 600 (Y600) is a Phosphotyrosine. Positions 619–882 (VKIEEVIGAG…EIVNTLDKMI (264 aa)) constitute a Protein kinase domain. ATP-binding positions include 625-633 (IGAGEFGEV) and K651. The active-site Proton acceptor is the D744. The 65-residue stretch at 911–975 (TAFTTVDDWL…LSSIHSMRVQ (65 aa)) folds into the SAM domain. Residue Y928 is modified to Phosphotyrosine; by autocatalysis. Residues 982–984 (VMA) carry the PDZ-binding motif.

Belongs to the protein kinase superfamily. Tyr protein kinase family. Ephrin receptor subfamily. In terms of assembly, heterotetramer upon binding of the ligand. The heterotetramer is composed of an ephrin dimer and a receptor dimer. Oligomerization is probably required to induce biological responses. Interacts with EPHB6; transphosphorylates EPHB6 to form an active signaling complex. Interacts with PICK1. Interacts (through Tyr-594) with NCK1 (via SH2 domain); activates the JUN cascade to regulate cell adhesion. The ligand-activated form interacts (through Tyr-928) with GRB7 and GRB10 (via SH2 domains). The ligand-activated form interacts (residues within the catalytic domain) with GRB2 (via SH2 domain). Interacts with GRB2, SHC1 and SRC; activates the MAPK/ERK cascade to regulate cell migration. Interacts with CBL; regulates receptor degradation through ubiquitination. Interacts with ACP1. Post-translationally, phosphorylated. Autophosphorylation is stimulated by the ligand EFNB1. Required for interaction with SH2 domain-containing interactors, for activation of the MAPK/ERK and JUN signaling cascades and for ubiquitination by CBL. Ubiquitinated; (EFNB1)ligand-induced poly- and/or multi-ubiquitination by CBL is regulated by SRC and leads to lysosomal degradation. As to expression, restricted to brain and testes.

Its subcellular location is the cell membrane. The protein localises to the early endosome membrane. It localises to the cell projection. The protein resides in the dendrite. It catalyses the reaction L-tyrosyl-[protein] + ATP = O-phospho-L-tyrosyl-[protein] + ADP + H(+). Its function is as follows. Receptor tyrosine kinase which binds promiscuously transmembrane ephrin-B family ligands residing on adjacent cells, leading to contact-dependent bidirectional signaling into neighboring cells. The signaling pathway downstream of the receptor is referred to as forward signaling while the signaling pathway downstream of the ephrin ligand is referred to as reverse signaling. Cognate/functional ephrin ligands for this receptor include EFNB1, EFNB2 and EFNB3. During nervous system development, regulates retinal axon guidance redirecting ipsilaterally ventrotemporal retinal ganglion cells axons at the optic chiasm midline. This probably requires repulsive interaction with EFNB2. In the adult nervous system together with EFNB3, regulates chemotaxis, proliferation and polarity of the hippocampus neural progenitors. In addition to its role in axon guidance also plays an important redundant role with other ephrin-B receptors in development and maturation of dendritic spines and synapse formation. May also regulate angiogenesis. More generally, may play a role in targeted cell migration and adhesion. Upon activation by EFNB1 and probably other ephrin-B ligands activates the MAPK/ERK and the JNK signaling cascades to regulate cell migration and adhesion respectively. Involved in the maintenance of the pool of satellite cells (muscle stem cells) by promoting their self-renewal and reducing their activation and differentiation. The polypeptide is Ephrin type-B receptor 1 (Ephb1) (Rattus norvegicus (Rat)).